Reading from the N-terminus, the 408-residue chain is UDP-N-acetylglucosamine--N-acetylmuramyl-(pentapeptide) pyrophosphoryl-undecaprenol N-acetylglucosamine transferase (408 aa).

Residues 1-20 (MNDTVKKPTGGRGDDPLPAG) form a disordered region. UDP-N-acetyl-alpha-D-glucosamine contacts are provided by residues 41 to 43 (TAG), N160, R197, S231, and Q327.

The protein belongs to the glycosyltransferase 28 family. MurG subfamily.

The protein resides in the cell membrane. The enzyme catalyses di-trans,octa-cis-undecaprenyl diphospho-N-acetyl-alpha-D-muramoyl-L-alanyl-D-glutamyl-meso-2,6-diaminopimeloyl-D-alanyl-D-alanine + UDP-N-acetyl-alpha-D-glucosamine = di-trans,octa-cis-undecaprenyl diphospho-[N-acetyl-alpha-D-glucosaminyl-(1-&gt;4)]-N-acetyl-alpha-D-muramoyl-L-alanyl-D-glutamyl-meso-2,6-diaminopimeloyl-D-alanyl-D-alanine + UDP + H(+). Its pathway is cell wall biogenesis; peptidoglycan biosynthesis. In terms of biological role, cell wall formation. Catalyzes the transfer of a GlcNAc subunit on undecaprenyl-pyrophosphoryl-MurNAc-pentapeptide (lipid intermediate I) to form undecaprenyl-pyrophosphoryl-MurNAc-(pentapeptide)GlcNAc (lipid intermediate II). The sequence is that of UDP-N-acetylglucosamine--N-acetylmuramyl-(pentapeptide) pyrophosphoryl-undecaprenol N-acetylglucosamine transferase from Mycobacterium avium (strain 104).